The sequence spans 91 residues: Lactococcin-B immunity protein (91 aa).

Functionally, imparts immunity to lactococcin-B to naturally sensitive host strains. The polypeptide is Lactococcin-B immunity protein (lciB) (Lactococcus lactis subsp. cremoris (Streptococcus cremoris)).